A 682-amino-acid chain; its full sequence is MTDFLIAFGSQTGQAETIAKSLKEKAELIGLTPRLHALDENEKKFNLNEEKLCAIVVSSTGDGDAPDNCARFVRRINRNSLENEYLKNLDYVLLGLGDSNYSSYQTIPRKIDKQLTALGANRLFDRAEADDQVGLELEVEPWIEKFFATLASRFDISADKMNAITESSNLKLNQVKTEEEKKALLQKRIEDEESDDEGRGRVIGIDMLIPEHYDYPEISLLKGSQTLSNDENLRVPIAPQPFIVSSVSNRKLPEDTKLEWQNLCKMPGVVTKPFEVLVVSAEFVTDPFSKKIKTKRMITVDFGDHAAELQYEPGDAIYFCVPNPALEVNFILKRCGVLDIADQQCELSINPKTEKINAQIPGHVHKITTLRHMFTTCLDIRRAPGRPLIRVLAESTSDPNEKRRLLELCSAQGMKDFTDFVRTPGLSLADMLFAFPNVKPPVDRLIELLPRLIPRPYSMSSYENRKARLIYSEMEFPATDGRRHSRKGLATDWLNSLRIGDKVQVLGKEPARFRLPPLGMTKNSAGKLPLLMVGPGTGVSVFLSFLHFLRKLKQDSPSDFVDVPRVLFFGCRDSSVDAIYMSELEMFVSEGILTDLIICESEQKGERVQDGLRKYLDKVLPFLTASTESKIFICGDAKGMSKDVWQCFSDIVASDQGIPDLEAKKKLMDLKKSDQYIEDVWG.

One can recognise a Flavodoxin-like domain in the interval 4–147; it reads FLIAFGSQTG…EVEPWIEKFF (144 aa). 93-124 contacts FMN; sequence LLGLGDSNYSSYQTIPRKIDKQLTALGANRLF. Positions 271 to 516 constitute an FAD-binding FR-type domain; it reads TKPFEVLVVS…GKEPARFRLP (246 aa). Lys293 lines the NADP(+) pocket. Residues 455 to 458 and 488 to 491 each bind FAD; these read RPYS and GLAT. Residues 607 to 609 and Asp643 contribute to the NADP(+) site; that span reads RVQ. Position 681 (Trp681) interacts with FAD.

Requires FAD as cofactor. FMN serves as cofactor.

It carries out the reaction 2 methylcob(III)alamin-[methionine synthase] + 2 S-adenosyl-L-homocysteine + NADP(+) + H(+) = 2 cob(II)alamin-[methionine synthase] + 2 S-adenosyl-L-methionine + NADPH. Involved in the reductive regeneration of cob(I)alamin cofactor required for the maintenance of methionine synthase in a functional state. In Caenorhabditis elegans, this protein is Methionine synthase reductase.